We begin with the raw amino-acid sequence, 282 residues long: Kallikrein-11 (282 aa).

A signal peptide spans 1–50 (MQRLRWLRDWKSSGRGLTAAKEPGARSSPLQAMRILQLILLALATGLVGG). A propeptide spans 51–53 (ETR) (activation peptide). The 228-residue stretch at 53–280 (RIIKGFECKP…YVDWIQETMK (228 aa)) folds into the Peptidase S1 domain. 6 disulfides stabilise this stretch: C60–C195, C79–C95, C167–C269, C174–C241, C206–C220, and C231–C256. H94 functions as the Charge relay system in the catalytic mechanism. N-linked (GlcNAc...) asparagine glycosylation occurs at N131. D142 acts as the Charge relay system in catalysis. Residues N197 and N213 are each glycosylated (N-linked (GlcNAc...) asparagine). S235 acts as the Charge relay system in catalysis. N242 carries N-linked (GlcNAc...) asparagine glycosylation.

This sequence belongs to the peptidase S1 family. Kallikrein subfamily. About 40% of KLK11 is inactivated by internal cleavage after Arg-188. This proteolytic inactivation may be effected by plasminogen. As to expression, expressed in brain, skin and prostate. Isoform 1 is expressed preferentially in brain. Isoform 2 is expressed in prostate. Present in seminal plasma at concentrations ranging from 2 to 37 microg/mL (at protein level).

It localises to the secreted. Its subcellular location is the golgi apparatus. Its function is as follows. Possible multifunctional protease. Efficiently cleaves 'bz-Phe-Arg-4-methylcoumaryl-7-amide', a kallikrein substrate, and weakly cleaves other substrates for kallikrein and trypsin. Cleaves synthetic peptides after arginine but not lysine residues. The sequence is that of Kallikrein-11 (KLK11) from Homo sapiens (Human).